Reading from the N-terminus, the 120-residue chain is Large ribosomal subunit protein bL20 (120 aa).

The protein belongs to the bacterial ribosomal protein bL20 family.

Binds directly to 23S ribosomal RNA and is necessary for the in vitro assembly process of the 50S ribosomal subunit. It is not involved in the protein synthesizing functions of that subunit. This Ureaplasma parvum serovar 3 (strain ATCC 27815 / 27 / NCTC 11736) protein is Large ribosomal subunit protein bL20.